The primary structure comprises 122 residues: Acidic phospholipase A2 (122 aa).

7 disulfides stabilise this stretch: Cys-26-Cys-115, Cys-28-Cys-44, Cys-43-Cys-95, Cys-49-Cys-122, Cys-50-Cys-88, Cys-57-Cys-81, and Cys-75-Cys-86. Ca(2+)-binding residues include Tyr-27, Gly-29, and Gly-31. His-47 is an active-site residue. Asp-48 is a Ca(2+) binding site. Asp-89 is an active-site residue.

As to quaternary structure, may form tetramers. Ca(2+) is required as a cofactor. As to expression, expressed by the venom gland.

The protein resides in the secreted. It catalyses the reaction a 1,2-diacyl-sn-glycero-3-phosphocholine + H2O = a 1-acyl-sn-glycero-3-phosphocholine + a fatty acid + H(+). PLA2 catalyzes the calcium-dependent hydrolysis of the 2-acyl groups in 3-sn-phosphoglycerides. In vivo, is non-lethal to mice when intravenously injected up to a concentration of 30 ug, however does show significant edematogenic activity at the injection site. The polypeptide is Acidic phospholipase A2 (Lachesis acrochorda (Chocoan bushmaster)).